The sequence spans 168 residues: ATP synthase F(1) complex subunit delta, mitochondrial (168 aa).

A mitochondrion-targeting transit peptide spans 1 to 22; sequence MLPAALLRRPGLGRLVRHARAY. 2 positions are modified to N6-acetyllysine; alternate: Lys136 and Lys165. N6-succinyllysine; alternate occurs at positions 136 and 165.

Belongs to the ATPase epsilon chain family. Component of the ATP synthase complex composed at least of ATP5F1A/subunit alpha, ATP5F1B/subunit beta, ATP5MC1/subunit c (homooctomer), MT-ATP6/subunit a, MT-ATP8/subunit 8, ATP5ME/subunit e, ATP5MF/subunit f, ATP5MG/subunit g, ATP5MK/subunit k, ATP5MJ/subunit j, ATP5F1C/subunit gamma, ATP5F1D/subunit delta, ATP5F1E/subunit epsilon, ATP5PF/subunit F6, ATP5PB/subunit b, ATP5PD/subunit d, ATP5PO/subunit OSCP. ATP synthase complex consists of a soluble F(1) head domain (subunits alpha(3) and beta(3)) - the catalytic core - and a membrane F(0) domain - the membrane proton channel (subunits c, a, 8, e, f, g, k and j). These two domains are linked by a central stalk (subunits gamma, delta, and epsilon) rotating inside the F1 region and a stationary peripheral stalk (subunits F6, b, d, and OSCP). Component of a complex composed at least by ATPIF1, ATP5F1A, ATP5F1B, ATP5F1C AND ATP5F1E.

The protein localises to the mitochondrion. The protein resides in the mitochondrion inner membrane. Its function is as follows. Subunit delta, of the mitochondrial membrane ATP synthase complex (F(1)F(0) ATP synthase or Complex V) that produces ATP from ADP in the presence of a proton gradient across the membrane which is generated by electron transport complexes of the respiratory chain. ATP synthase complex consist of a soluble F(1) head domain - the catalytic core - and a membrane F(1) domain - the membrane proton channel. These two domains are linked by a central stalk rotating inside the F(1) region and a stationary peripheral stalk. During catalysis, ATP synthesis in the catalytic domain of F(1) is coupled via a rotary mechanism of the central stalk subunits to proton translocation. In vivo, can only synthesize ATP although its ATP hydrolase activity can be activated artificially in vitro. With the central stalk subunit gamma, is essential for the biogenesis of F(1) catalytic part of the ATP synthase complex namely in the formation of F1 assembly intermediate. This is ATP synthase F(1) complex subunit delta, mitochondrial from Homo sapiens (Human).